A 333-amino-acid polypeptide reads, in one-letter code: B3 domain-containing protein At1g32030 (333 aa).

2 stretches are compositionally biased toward polar residues: residues valine 76 to aspartate 99 and proline 134 to leucine 143. The tract at residues valine 76–tyrosine 179 is disordered. Residues glutamine 220 to proline 328 constitute a DNA-binding region (TF-B3).

Its subcellular location is the nucleus. The polypeptide is B3 domain-containing protein At1g32030 (Arabidopsis thaliana (Mouse-ear cress)).